The chain runs to 139 residues: Aspartate 1-decarboxylase (139 aa).

Residue Ser25 is the Schiff-base intermediate with substrate; via pyruvic acid of the active site. Ser25 carries the pyruvic acid (Ser) modification. Residue Thr57 participates in substrate binding. Tyr58 acts as the Proton donor in catalysis. 73 to 75 is a substrate binding site; sequence GAA. Residues 117–139 form a disordered region; the sequence is LGADPAEPVPGSDQARSPQAVTA. Residues 130-139 are compositionally biased toward polar residues; that stretch reads QARSPQAVTA.

Belongs to the PanD family. As to quaternary structure, heterooctamer of four alpha and four beta subunits. The cofactor is pyruvate. Post-translationally, is synthesized initially as an inactive proenzyme, which is activated by self-cleavage at a specific serine bond to produce a beta-subunit with a hydroxyl group at its C-terminus and an alpha-subunit with a pyruvoyl group at its N-terminus.

The protein localises to the cytoplasm. It carries out the reaction L-aspartate + H(+) = beta-alanine + CO2. The protein operates within cofactor biosynthesis; (R)-pantothenate biosynthesis; beta-alanine from L-aspartate: step 1/1. Catalyzes the pyruvoyl-dependent decarboxylation of aspartate to produce beta-alanine. The sequence is that of Aspartate 1-decarboxylase from Streptomyces avermitilis (strain ATCC 31267 / DSM 46492 / JCM 5070 / NBRC 14893 / NCIMB 12804 / NRRL 8165 / MA-4680).